A 286-amino-acid chain; its full sequence is Formyltetrahydrofolate deformylase (286 aa).

The ACT domain maps to 8–88; it reads VLTLQCPEGI…MDWQLRERGQ (81 aa). Aspartate 230 is a catalytic residue.

This sequence belongs to the PurU family.

The enzyme catalyses (6R)-10-formyltetrahydrofolate + H2O = (6S)-5,6,7,8-tetrahydrofolate + formate + H(+). The protein operates within purine metabolism; IMP biosynthesis via de novo pathway; formate from 10-formyl-5,6,7,8-tetrahydrofolate: step 1/1. Catalyzes the hydrolysis of 10-formyltetrahydrofolate (formyl-FH4) to formate and tetrahydrofolate (FH4). The sequence is that of Formyltetrahydrofolate deformylase from Corynebacterium sp. (strain P-1).